Reading from the N-terminus, the 470-residue chain is Histidine--tRNA ligase (470 aa).

A disordered region spans residues 69–99 (GIDPILPPNRQAEKDKSGETGKDKSGETGSE). A compositionally biased stretch (basic and acidic residues) spans 79–94 (QAEKDKSGETGKDKSG).

The protein belongs to the class-II aminoacyl-tRNA synthetase family. Homodimer.

The protein localises to the cytoplasm. It catalyses the reaction tRNA(His) + L-histidine + ATP = L-histidyl-tRNA(His) + AMP + diphosphate + H(+). This chain is Histidine--tRNA ligase, found in Nostoc punctiforme (strain ATCC 29133 / PCC 73102).